Here is a 263-residue protein sequence, read N- to C-terminus: Tryptophan synthase alpha chain (263 aa).

Residues E49 and D60 each act as proton acceptor in the active site.

The protein belongs to the TrpA family. In terms of assembly, tetramer of two alpha and two beta chains.

It catalyses the reaction (1S,2R)-1-C-(indol-3-yl)glycerol 3-phosphate + L-serine = D-glyceraldehyde 3-phosphate + L-tryptophan + H2O. It participates in amino-acid biosynthesis; L-tryptophan biosynthesis; L-tryptophan from chorismate: step 5/5. In terms of biological role, the alpha subunit is responsible for the aldol cleavage of indoleglycerol phosphate to indole and glyceraldehyde 3-phosphate. The sequence is that of Tryptophan synthase alpha chain from Jannaschia sp. (strain CCS1).